The primary structure comprises 371 residues: Riboflavin biosynthesis protein RibD (371 aa).

In terms of domain architecture, CMP/dCMP-type deaminase spans 1 to 122; it reads MEEYYMNTAI…MLEEAGIEVK (122 aa). A deaminase region spans residues 1–144; that stretch reads MEEYYMNTAI…KMFLHFMRTG (144 aa). H49 contacts Zn(2+). E51 acts as the Proton donor in catalysis. Zn(2+)-binding residues include C74 and C83. A reductase region spans residues 145 to 371; that stretch reads LPYVTLKAAA…KDGDDVYRNR (227 aa). Residue A153 coordinates NADP(+). S167 provides a ligand contact to substrate. W169 is an NADP(+) binding site. Position 183 (R183) interacts with substrate. T195 and D199 together coordinate NADP(+). L203 and R206 together coordinate substrate. T221 provides a ligand contact to NADP(+). Residue E290 participates in substrate binding. 292 to 298 contacts NADP(+); that stretch reads GASVHGS.

It in the N-terminal section; belongs to the cytidine and deoxycytidylate deaminase family. The protein in the C-terminal section; belongs to the HTP reductase family. The cofactor is Zn(2+).

It carries out the reaction 2,5-diamino-6-hydroxy-4-(5-phosphoribosylamino)-pyrimidine + H2O + H(+) = 5-amino-6-(5-phospho-D-ribosylamino)uracil + NH4(+). The catalysed reaction is 5-amino-6-(5-phospho-D-ribitylamino)uracil + NADP(+) = 5-amino-6-(5-phospho-D-ribosylamino)uracil + NADPH + H(+). Its pathway is cofactor biosynthesis; riboflavin biosynthesis; 5-amino-6-(D-ribitylamino)uracil from GTP: step 2/4. The protein operates within cofactor biosynthesis; riboflavin biosynthesis; 5-amino-6-(D-ribitylamino)uracil from GTP: step 3/4. Converts 2,5-diamino-6-(ribosylamino)-4(3h)-pyrimidinone 5'-phosphate into 5-amino-6-(ribosylamino)-2,4(1h,3h)-pyrimidinedione 5'-phosphate. This Bacillus amyloliquefaciens (Bacillus velezensis) protein is Riboflavin biosynthesis protein RibD (ribD).